The primary structure comprises 2493 residues: Polyprotein P1234 (2493 aa).

One can recognise an Alphavirus-like MT domain in the interval 28–259; that stretch reads EAKQVTDNDH…EKRDLLRSWH (232 aa). The interval 244–263 is nsP1 membrane-binding; the sequence is GSTIYHEKRDLLRSWHLPSV. C419 carries the S-palmitoyl cysteine; by host lipid modification. The 152-residue stretch at 690–841 folds into the (+)RNA virus helicase ATP-binding domain; that stretch reads ELVDPPFHEF…HEICTQVFHK (152 aa). 721 to 728 is a binding site for a ribonucleoside 5'-triphosphate; sequence GVPGSGKS. Residues 842–990 form the (+)RNA virus helicase C-terminal domain; sequence SISRRCTKSV…IEEWQAEHDA (149 aa). The Peptidase C9 domain occupies 1003 to 1322; the sequence is DVFQNKANVC…STLTNIYTGS (320 aa). The nucleolus localization signal stretch occupies residues 1004 to 1023; it reads VFQNKANVCWAKALVPVLKT. Residue C1012 is the For cysteine protease nsP2 activity of the active site. A Nuclear export signal motif is present at residues 1056 to 1065; it reads VRFFGLDLDS. H1081 (for cysteine protease nsP2 activity) is an active-site residue. The short motif at 1179–1183 is the Nuclear localization signal element; it reads PGKKV. In terms of domain architecture, Macro spans 1330–1489; sequence APSYHVVRGD…TLKEAVARRE (160 aa). ADP-D-ribose is bound by residues D1339, N1353, G1361, G1441, I1442, and F1443. The Zn(2+) site is built by C1596, C1598, C1621, and C1639. 2 disordered regions span residues 1664–1684 and 1790–1826; these read PVEE…TPEQ and APRT…STPP. Residues 1814–1823 are compositionally biased toward polar residues; that stretch reads RASSRTSLVS. 2 repeat units span residues 1818 to 1839 and 1852 to 1873. Residues 1818 to 1873 form a 2 X 21 AA approximate repeats, binding to host FXR family members region; sequence RTSLVSTPPGVNRVITREELEALTPSRAPSRSASRTSLVSNPPGVNRVITREEFEA. Residues 2250 to 2365 enclose the RdRp catalytic domain; the sequence is DCVLETDIAS…KGVKSDKLMA (116 aa).

As to quaternary structure, interacts with non-structural protein 3. Interacts with RNA-directed RNA polymerase nsP4. Interacts with protease nsP2. interacts with itself. Interacts with mRNA-capping enzyme nsP1. Interacts with host DDX1. Interacts with host DDX3. Interacts (via C-terminus) with host FXR1; this interaction inhibits the formation of host stress granules on viral mRNAs and the nsp3-FXR1 complexes bind viral RNAs and probably orchestrate the assembly of viral replication complexes. Interacts (via C-terminus) with host FXR2; this interaction inhibits the formation of host stress granules on viral mRNAs and the nsp3-FXR2 complexes bind viral RNAs and probably orchestrate the assembly of viral replication complexes. Interacts (via C-terminus) with host FMR1; this interaction inhibits the formation of host stress granules on viral mRNAs and the nsp3-FMR1 complexes bind viral RNAs and probably orchestrate the assembly of viral replication complexes. In terms of assembly, interacts with mRNA-capping enzyme nsP1. Interacts with protease nsP2. interacts with itself. As to quaternary structure, interacts with RNA-directed RNA polymerase nsP4. Interacts with mRNA-capping enzyme nsP1. Interacts with KPNA1/karyopherin-alpha1; this interaction probably allows the active transport of protease nsP2 into the host nucleus. Mg(2+) is required as a cofactor. Mn(2+) serves as cofactor. Specific enzymatic cleavages in vivo yield mature proteins. The processing of the polyprotein is temporally regulated. In early stages (1.7 hpi), P1234 is first cleaved in trans through its nsP2 protease activity, releasing P123' and nsP4, which associate to form the early replication complex. At the same time, P1234 is also cut at the nsP1/nsP2 site early in infection but with lower efficiency. After replication of the viral minus-strand RNAs (4 hpi), the polyproteins are cut at the nsP1/nsP2 and nsP2/nsP3 sites very efficiently, preventing accumulation of P123' and P1234 and allowing the formation of the late replication complex. NsP3'/nsP4 site is not cleaved anymore and P34 is produced rather than nsP4. In terms of processing, specific enzymatic cleavages in vivo yield mature proteins. The processing of the polyprotein is temporally regulated. In early stages (1.7 hpi), P123 is cleaved at the nsP1/nsP2 site with low efficiency. After replication of the viral minus-strand RNAs (4 hpi), the polyproteins are cut at the nsP1/nsP2 and nsP2/nsP3 sites very efficiently, preventing accumulation of P123 and allowing the formation of the late replication complex. Post-translationally, specific enzymatic cleavages in vivo yield mature proteins. The processing of the polyprotein is temporally regulated. In early stages (1.7 hpi), P123' is cleaved at the nsP1/nsP2 site with low efficiency. After replication of the viral minus-strand RNAs (4 hpi), the polyproteins are cut at the nsP1/nsP2 and nsP2/nsP3 sites very efficiently, preventing accumulation of P123' and allowing the formation of the late replication complex. Palmitoylated by host palmitoyltransferases ZDHHC2 and ZDHHC19. In terms of processing, phosphorylated by host on serines and threonines. Post-translationally, ubiquitinated; targets the protein for rapid degradation via the ubiquitin system. Nsp4 is present in extremely low quantities due to low frequency of translation through the amber stop-codon and the degradation by the ubiquitin pathway.

It localises to the host cytoplasmic vesicle membrane. The protein localises to the host cell membrane. The protein resides in the host cell projection. It is found in the host filopodium. Its subcellular location is the host nucleus. It localises to the host cytoplasm. The catalysed reaction is GTP + S-adenosyl-L-methionine = N(7)-methyl-GTP + S-adenosyl-L-homocysteine. The enzyme catalyses N(7)-methyl-GTP + L-histidyl-[protein] = N(tele)-(N(7)-methylguanosine 5'-phospho)-L-histidyl-[protein] + diphosphate. It catalyses the reaction N(tele)-(N(7)-methylguanosine 5'-phospho)-L-histidyl-[protein] + a 5'-end diphospho-(purine-ribonucleoside) in mRNA + H(+) = a 5'-end (N(7)-methyl 5'-triphosphoguanosine)-(purine-ribonucleoside) in mRNA + L-histidyl-[protein]. It carries out the reaction a 5'-end triphospho-ribonucleoside in mRNA + H2O = a 5'-end diphospho-ribonucleoside in mRNA + phosphate + H(+). The catalysed reaction is a ribonucleoside 5'-triphosphate + H2O = a ribonucleoside 5'-diphosphate + phosphate + H(+). The enzyme catalyses ATP + H2O = ADP + phosphate + H(+). It catalyses the reaction RNA(n) + a ribonucleoside 5'-triphosphate = RNA(n+1) + diphosphate. It carries out the reaction 4-O-(ADP-D-ribosyl)-L-aspartyl-[protein] + H2O = L-aspartyl-[protein] + ADP-D-ribose + H(+). The catalysed reaction is 5-O-(ADP-D-ribosyl)-L-glutamyl-[protein] + H2O = L-glutamyl-[protein] + ADP-D-ribose + H(+). The enzyme catalyses RNA(n) + ATP = RNA(n)-3'-adenine ribonucleotide + diphosphate. It catalyses the reaction ADP-alpha-D-ribose 1''-phosphate + H2O = ADP-D-ribose + phosphate. Its activity is regulated as follows. Inhibited by sinefungin. Its function is as follows. Inactive precursor of the viral replicase, which is activated by cleavages carried out by the viral protease nsP2. The early replication complex formed by the polyprotein P123 and nsP4 synthesizes the minus-strand RNAs (antigenome). Polyprotein P123 is a short-lived polyprotein that accumulates during early stage of infection. As soon P123 is cleaved into mature proteins, the plus-strand RNAs synthesis begins. Functionally, the early replication complex formed by the polyprotein P123' and nsP4 synthesizes minus-strand RNAs (antigenome). Polyprotein P123' is a short-lived polyprotein that accumulates during early stage of infection. As soon P123' is cleaved into mature proteins, the plus-strand RNAs synthesis begins. In terms of biological role, cytoplasmic capping enzyme that catalyzes two virus-specific reactions: methyltransferase and nsP1 guanylyltransferase. mRNA-capping is necessary since all viral RNAs are synthesized in the cytoplasm, and host capping enzymes are restricted to the nucleus. The enzymatic reaction involves a covalent link between 7-methyl-GMP and nsP1, whereas eukaryotic capping enzymes form a covalent complex only with GMP. NsP1 capping consists in the following reactions: GTP is first methylated into 7-methyl-GMP and then is covalently linked to nsP1 to form the m7GMp-nsP1 complex from which 7-methyl-GMP complex is transferred to the mRNA to create the cap structure. NsP1 is also needed for the initiation of the minus-strand RNAs synthesis. Probably serves as a membrane anchor for the replication complex composed of nsP1-nsP4. Nsp1 is needed for the initiation of the minus-strand RNAs synthesis. Palmitoylated nsP1 is remodeling host cell cytoskeleton, and induces filopodium-like structure formation at the surface of the host cell. Its function is as follows. Multifunctional protein whose N-terminus is part of the RNA polymerase complex and displays NTPase, RNA triphosphatase and helicase activities. NTPase and RNA triphosphatase are involved in viral RNA capping and helicase keeps a check on the dsRNA replication intermediates. The C-terminus harbors a protease that specifically cleaves the polyproteins and releases the mature proteins. Required for the shutoff of minus-strand RNAs synthesis. Inhibits host translation to ensure maximal viral gene expression and evade host immune response. Seems to be essential for minus-strand RNAs and subgenomic 26S mRNAs synthesis. Displays mono-ADP-ribosylhydrolase activity. ADP-ribosylation is a post-translational modification that controls various processes of the host cell and the virus probably needs to revert it for optimal viral replication. Binds proteins of FXR family and sequesters them into the viral RNA replication complexes thereby inhibiting the formation of host stress granules on viral mRNAs. The nsp3-FXR complexes bind viral RNAs and probably orchestrate the assembly of viral replication complexes, thanks to the ability of FXR family members to self-assemble and bind DNA. Functionally, seems to be essential for minus-strand RNAs and subgenomic 26S mRNAs synthesis. Displays mono-ADP-ribosylhydrolase activity. ADP-ribosylation is a post-translational modification that controls various processes of the host cell and the virus probably needs to revert it for optimal viral replication. Binds proteins of FXR family and sequesters them into the viral RNA replication complexes thereby inhibiting the formation of host stress granules on viral mRNAs. The nsp3'-FXR complexes bind viral RNAs and probably orchestrate the assembly of viral replication complexes, thanks to the ability of FXR family members to self-assemble and bind DNA. In terms of biological role, RNA dependent RNA polymerase. Replicates genomic and antigenomic RNA by recognizing replications specific signals. The early replication complex formed by the polyprotein P123 and nsP4 synthesizes minus-strand RNAs. The late replication complex composed of fully processed nsP1-nsP4 is responsible for the production of genomic and subgenomic plus-strand RNAs. This Bos taurus (Bovine) protein is Polyprotein P1234.